The primary structure comprises 225 residues: Glutathione s-transferase kappa 2 (225 aa).

Residues 15–17, N52, and 200–201 contribute to the glutathione site; these read SPY and SD.

Belongs to the GST superfamily. Kappa family. Expressed in the pharynx, body wall muscles and epidermis. Weaker expression is seen in the intestine.

The protein resides in the mitochondrion. It catalyses the reaction RX + glutathione = an S-substituted glutathione + a halide anion + H(+). Functionally, has roles in respiratory and lipid metabolism. The sequence is that of Glutathione s-transferase kappa 2 (gstk-2) from Caenorhabditis elegans.